A 513-amino-acid polypeptide reads, in one-letter code: ATP synthase subunit alpha (513 aa).

Residue 169–176 (GDRQTGKT) coordinates ATP.

The protein belongs to the ATPase alpha/beta chains family. In terms of assembly, F-type ATPases have 2 components, CF(1) - the catalytic core - and CF(0) - the membrane proton channel. CF(1) has five subunits: alpha(3), beta(3), gamma(1), delta(1), epsilon(1). CF(0) has three main subunits: a(1), b(2) and c(9-12). The alpha and beta chains form an alternating ring which encloses part of the gamma chain. CF(1) is attached to CF(0) by a central stalk formed by the gamma and epsilon chains, while a peripheral stalk is formed by the delta and b chains.

It localises to the cell inner membrane. It catalyses the reaction ATP + H2O + 4 H(+)(in) = ADP + phosphate + 5 H(+)(out). Produces ATP from ADP in the presence of a proton gradient across the membrane. The alpha chain is a regulatory subunit. In Haemophilus ducreyi (strain 35000HP / ATCC 700724), this protein is ATP synthase subunit alpha.